The sequence spans 433 residues: Enolase (433 aa).

The interval Arg-37 to Lys-59 is disordered. Basic and acidic residues predominate over residues Gly-47–Lys-59. Gln-166 contacts (2R)-2-phosphoglycerate. The active-site Proton donor is the Glu-208. Positions 245, 291, and 318 each coordinate Mg(2+). (2R)-2-phosphoglycerate-binding residues include Lys-343, Arg-372, Ser-373, and Lys-394. The Proton acceptor role is filled by Lys-343.

The protein belongs to the enolase family. Mg(2+) is required as a cofactor.

Its subcellular location is the cytoplasm. The protein localises to the secreted. It localises to the cell surface. The enzyme catalyses (2R)-2-phosphoglycerate = phosphoenolpyruvate + H2O. Its pathway is carbohydrate degradation; glycolysis; pyruvate from D-glyceraldehyde 3-phosphate: step 4/5. Catalyzes the reversible conversion of 2-phosphoglycerate (2-PG) into phosphoenolpyruvate (PEP). It is essential for the degradation of carbohydrates via glycolysis. This Leptospira biflexa serovar Patoc (strain Patoc 1 / Ames) protein is Enolase.